Here is a 2148-residue protein sequence, read N- to C-terminus: Polyketide synthase 1 (2148 aa).

The segment at Phe19–His261 is N-terminal acylcarrier protein transacylase domain (SAT). Positions Glu394 to Asp829 constitute a Ketosynthase family 3 (KS3) domain. Active-site for beta-ketoacyl synthase activity residues include Cys566, His701, and His745. The interval Phe930 to Leu1236 is malonyl-CoA:ACP transacylase (MAT) domain. Ser1018 functions as the For acyl/malonyl transferase activity in the catalytic mechanism. The product template (PT) domain stretch occupies residues Thr1310–Pro1624. Residues His1314–Val1447 form an N-terminal hotdog fold region. Residues His1314 to Asn1619 enclose the PKS/mFAS DH domain. His1346 functions as the Proton acceptor; for dehydratase activity in the catalytic mechanism. The tract at residues Leu1474–Asn1619 is C-terminal hotdog fold. The Proton donor; for dehydratase activity role is filled by Asp1533. Positions Asn1619 to His1655 are disordered. Residues Arg1634–Ser1650 show a composition bias toward low complexity. Residues Arg1678 to Thr1752 form the Carrier 1 domain. An O-(pantetheine 4'-phosphoryl)serine modification is found at Ser1712. The segment covering Ser1755–Pro1790 has biased composition (low complexity). A disordered region spans residues Ser1755 to Gly1796. A Carrier 2 domain is found at Ser1793–His1870. Position 1830 is an O-(pantetheine 4'-phosphoryl)serine (Ser1830). Residues Leu1882 to Thr2146 are thioesterase (TE) domain. The active-site For thioesterase activity is the Ser1973.

It participates in pigment biosynthesis. Its function is as follows. Polyketide synthase; part of the Pks1 gene cluster that mediates the biosynthesis of an anthraquinone derivative pigment that contributes to conidial pigmentation that provides protection from UV radiation, heat and cold stress. The polyketide synthase Pks1 produces 1-acetyl-2,4,6,8-tetrahydroxy-9,10-anthraquinone though condensation of acetyl-CoA with malonyl-CoA. The dehydratase EthD and the laccase Mlac1 further convert the anthraquinone derivative into the final conidial pigment. This chain is Polyketide synthase 1, found in Metarhizium robertsii (strain ARSEF 23 / ATCC MYA-3075) (Metarhizium anisopliae (strain ARSEF 23)).